A 335-amino-acid chain; its full sequence is Anthranilate phosphoribosyltransferase (335 aa).

Residues Gly79, 82 to 83 (GD), Ser87, 89 to 92 (NIST), 107 to 115 (KHGNRSISS), and Ser119 contribute to the 5-phospho-alpha-D-ribose 1-diphosphate site. Gly79 provides a ligand contact to anthranilate. Ser91 serves as a coordination point for Mg(2+). Residue Asn110 coordinates anthranilate. Arg165 provides a ligand contact to anthranilate. Residues Asp224 and Glu225 each contribute to the Mg(2+) site.

The protein belongs to the anthranilate phosphoribosyltransferase family. Homodimer. Mg(2+) is required as a cofactor.

The enzyme catalyses N-(5-phospho-beta-D-ribosyl)anthranilate + diphosphate = 5-phospho-alpha-D-ribose 1-diphosphate + anthranilate. Its pathway is amino-acid biosynthesis; L-tryptophan biosynthesis; L-tryptophan from chorismate: step 2/5. Its function is as follows. Catalyzes the transfer of the phosphoribosyl group of 5-phosphorylribose-1-pyrophosphate (PRPP) to anthranilate to yield N-(5'-phosphoribosyl)-anthranilate (PRA). The sequence is that of Anthranilate phosphoribosyltransferase from Streptococcus mutans serotype c (strain ATCC 700610 / UA159).